We begin with the raw amino-acid sequence, 668 residues long: Fructose-1,6-bisphosphatase class 3 (668 aa).

The protein belongs to the FBPase class 3 family. Mn(2+) serves as cofactor.

It catalyses the reaction beta-D-fructose 1,6-bisphosphate + H2O = beta-D-fructose 6-phosphate + phosphate. The protein operates within carbohydrate biosynthesis; gluconeogenesis. This Clostridium botulinum (strain 657 / Type Ba4) protein is Fructose-1,6-bisphosphatase class 3.